Here is a 511-residue protein sequence, read N- to C-terminus: D-alanine--D-alanyl carrier protein ligase (511 aa).

152 to 153 (TS) contributes to the ATP binding site. Position 199 (Asp199) interacts with D-alanine. 294 to 299 (NAYGPT) is a binding site for ATP. Val303 contributes to the D-alanine binding site. Residues Asp385, 397–400 (YGGR), and Lys499 contribute to the ATP site. Lys499 serves as a coordination point for D-alanine.

Belongs to the ATP-dependent AMP-binding enzyme family. DltA subfamily.

Its subcellular location is the cytoplasm. The enzyme catalyses holo-[D-alanyl-carrier protein] + D-alanine + ATP = D-alanyl-[D-alanyl-carrier protein] + AMP + diphosphate. Its pathway is cell wall biogenesis; lipoteichoic acid biosynthesis. Catalyzes the first step in the D-alanylation of lipoteichoic acid (LTA), the activation of D-alanine and its transfer onto the D-alanyl carrier protein (Dcp) DltC. In an ATP-dependent two-step reaction, forms a high energy D-alanyl-AMP intermediate, followed by transfer of the D-alanyl residue as a thiol ester to the phosphopantheinyl prosthetic group of the Dcp. D-alanylation of LTA plays an important role in modulating the properties of the cell wall in Gram-positive bacteria, influencing the net charge of the cell wall. In Streptococcus agalactiae serotype III (strain NEM316), this protein is D-alanine--D-alanyl carrier protein ligase.